Reading from the N-terminus, the 238-residue chain is End-binding protein 1 (238 aa).

Residues 15–117 (FVGRVSLLKW…FFQWFKWFFD (103 aa)) form the Calponin-homology (CH) domain. The tract at residues 101 to 238 (KYMDNFEFFQ…EDILYAEYHQ (138 aa)) is interaction with aurora kinase. Over residues 124 to 165 (KSGATESGSANAVTKTSKPGNRSGSTAASMQNPKASSTSGPS) the composition is skewed to polar residues. The disordered stretch occupies residues 124 to 169 (KSGATESGSANAVTKTSKPGNRSGSTAASMQNPKASSTSGPSIDSK). S148 is modified (phosphoserine). One can recognise an EB1 C-terminal domain in the interval 156 to 238 (PKASSTSGPS…EDILYAEYHQ (83 aa)).

Belongs to the MAPRE family. As to quaternary structure, homodimer; disulfide-linked and via interaction of the C-terminal EB1-specific domains. Interacts with BOP1 (via C-terminal WD repeats). Interacts with giardin subunit gamma, neurogenic locus notch homolog protein, GL50803_8358 and GL50803_11327. Interacts (via C-terminal residues 101-238) with aurora kinase. Interacts with tubulin gamma chain. Post-translationally, phosphorylated in vitro by aurora kinase. Phosphorylation is important for cell division.

Its subcellular location is the nucleus membrane. The protein localises to the cytoplasm. It is found in the cytoskeleton. It localises to the spindle. The protein resides in the nucleus envelope. Its subcellular location is the flagellum axoneme. The protein localises to the cell projection. It is found in the cilium. It localises to the flagellum. Its function is as follows. Involved in cell division. Involved in mitosis. Regulates dynamics of microtubules (MTs) during mitosis. Required for cytokinesis. Binds polymerized MTs in vitro. Is able to rescue a mitotic division defect, the proper positioning of the nucleus, of the S.cerevisiae BIM1 knockout mutant in a complementation assay. May play a role in spindle positioning and MT distribution. May be involved in MT nucleation for the formation of median bodies and in the biogenesis of flagella. Based on its localization to both the flagellar exit point and the distal flagellar tips, it may mediate the transition from anterograde to retrograde intraflagellar transport (IFT). The protein is End-binding protein 1 of Giardia intestinalis (strain ATCC 50803 / WB clone C6) (Giardia lamblia).